The following is a 223-amino-acid chain: Agamous-like MADS-box protein AGL11 (223 aa).

The MADS-box domain maps to 1-61; the sequence is MGRGKIEIKR…GRVYEYSNNN (61 aa). Residues 87-177 enclose the K-box domain; it reads AQYYQQESAK…RTKIAEVERL (91 aa).

The protein localises to the nucleus. Probable transcription factor involved in seed development. The chain is Agamous-like MADS-box protein AGL11 from Vitis vinifera (Grape).